A 162-amino-acid chain; its full sequence is Regulator of sigma D (162 aa).

This sequence belongs to the Rsd/AlgQ family. As to quaternary structure, interacts with RpoD.

The protein resides in the cytoplasm. Binds RpoD and negatively regulates RpoD-mediated transcription activation by preventing the interaction between the primary sigma factor RpoD with the catalytic core of the RNA polymerase and with promoter DNA. May be involved in replacement of the RNA polymerase sigma subunit from RpoD to RpoS during the transition from exponential growth to the stationary phase. The chain is Regulator of sigma D from Salmonella agona (strain SL483).